A 184-amino-acid chain; its full sequence is MAYPGKSTKSYDTPQHPWQAERMASEVELVKKYGLRNKRELWKSLSVLRRFRGDARRLLAESAESDLIGHSKTEADQLLTKLIRFSILKSDSNIDDVLGLQTEAILERRLQTQVHRLGLARTARQARQFITHGHIAIDGKRVTVPGMMVTREQEMNVEYYGTSPMTKESHPERPAQIAASVVEE.

The S4 RNA-binding domain occupies Arg-108–Glu-172. Residues Ser-163–Glu-184 are disordered.

It belongs to the universal ribosomal protein uS4 family. In terms of assembly, part of the 30S ribosomal subunit. Contacts protein S5. The interaction surface between S4 and S5 is involved in control of translational fidelity.

Functionally, one of the primary rRNA binding proteins, it binds directly to 16S rRNA where it nucleates assembly of the body of the 30S subunit. In terms of biological role, with S5 and S12 plays an important role in translational accuracy. The sequence is that of Small ribosomal subunit protein uS4 from Methanococcoides burtonii (strain DSM 6242 / NBRC 107633 / OCM 468 / ACE-M).